The chain runs to 236 residues: Biosynthetic peptidoglycan transglycosylase (236 aa).

The helical transmembrane segment at 17–37 threads the bilayer; sequence IVILVALALLALPYLLTILYG.

This sequence belongs to the glycosyltransferase 51 family.

The protein localises to the cell inner membrane. It carries out the reaction [GlcNAc-(1-&gt;4)-Mur2Ac(oyl-L-Ala-gamma-D-Glu-L-Lys-D-Ala-D-Ala)](n)-di-trans,octa-cis-undecaprenyl diphosphate + beta-D-GlcNAc-(1-&gt;4)-Mur2Ac(oyl-L-Ala-gamma-D-Glu-L-Lys-D-Ala-D-Ala)-di-trans,octa-cis-undecaprenyl diphosphate = [GlcNAc-(1-&gt;4)-Mur2Ac(oyl-L-Ala-gamma-D-Glu-L-Lys-D-Ala-D-Ala)](n+1)-di-trans,octa-cis-undecaprenyl diphosphate + di-trans,octa-cis-undecaprenyl diphosphate + H(+). Its pathway is cell wall biogenesis; peptidoglycan biosynthesis. Its function is as follows. Peptidoglycan polymerase that catalyzes glycan chain elongation from lipid-linked precursors. This chain is Biosynthetic peptidoglycan transglycosylase, found in Rhodopseudomonas palustris (strain ATCC BAA-98 / CGA009).